The following is a 399-amino-acid chain: Phosphoglycerate kinase (399 aa).

Residues 20 to 22, arginine 35, 58 to 61, arginine 117, and arginine 154 contribute to the substrate site; these read DFN and HLGR. Residues lysine 204, glycine 295, glutamate 326, and 355 to 358 contribute to the ATP site; that span reads GGDS.

It belongs to the phosphoglycerate kinase family. In terms of assembly, monomer.

It localises to the cytoplasm. It carries out the reaction (2R)-3-phosphoglycerate + ATP = (2R)-3-phospho-glyceroyl phosphate + ADP. The protein operates within carbohydrate degradation; glycolysis; pyruvate from D-glyceraldehyde 3-phosphate: step 2/5. This is Phosphoglycerate kinase from Beutenbergia cavernae (strain ATCC BAA-8 / DSM 12333 / CCUG 43141 / JCM 11478 / NBRC 16432 / NCIMB 13614 / HKI 0122).